The chain runs to 417 residues: UDP-N-acetylglucosamine 1-carboxyvinyltransferase 2 (417 aa).

22–23 (KN) contacts phosphoenolpyruvate. A UDP-N-acetyl-alpha-D-glucosamine-binding site is contributed by arginine 92. Residue cysteine 116 is the Proton donor of the active site. 2-(S-cysteinyl)pyruvic acid O-phosphothioketal is present on cysteine 116. Residues 121 to 125 (RPIDL), aspartate 305, and isoleucine 327 contribute to the UDP-N-acetyl-alpha-D-glucosamine site.

Belongs to the EPSP synthase family. MurA subfamily.

It is found in the cytoplasm. It catalyses the reaction phosphoenolpyruvate + UDP-N-acetyl-alpha-D-glucosamine = UDP-N-acetyl-3-O-(1-carboxyvinyl)-alpha-D-glucosamine + phosphate. It functions in the pathway cell wall biogenesis; peptidoglycan biosynthesis. In terms of biological role, cell wall formation. Adds enolpyruvyl to UDP-N-acetylglucosamine. In Caldanaerobacter subterraneus subsp. tengcongensis (strain DSM 15242 / JCM 11007 / NBRC 100824 / MB4) (Thermoanaerobacter tengcongensis), this protein is UDP-N-acetylglucosamine 1-carboxyvinyltransferase 2.